The chain runs to 330 residues: Flotillin-like protein FloA (330 aa).

Helical transmembrane passes span 5–25 and 27–47; these read FLPLILLGAAVLLLAIFFYYV and FLLWISAKVSGVNISLIQLFL.

The protein belongs to the flotillin-like FloA family. Homooligomerizes.

The protein resides in the cell membrane. It is found in the membrane raft. Functionally, found in functional membrane microdomains (FMM) that may be equivalent to eukaryotic membrane rafts. FMMs are highly dynamic and increase in number as cells age. Flotillins are thought to be important factors in membrane fluidity. This Parabacteroides distasonis (strain ATCC 8503 / DSM 20701 / CIP 104284 / JCM 5825 / NCTC 11152) protein is Flotillin-like protein FloA.